We begin with the raw amino-acid sequence, 300 residues long: GTPase Era (300 aa).

The Era-type G domain maps to 8–176; that stretch reads RCGYVAIVGR…EKVIADHLPE (169 aa). Residues 16-23 form a G1 region; sequence GRPNVGKS. 16–23 contacts GTP; it reads GRPNVGKS. Positions 42–46 are G2; it reads QTTRH. The segment at 63–66 is G3; that stretch reads DTPG. GTP contacts are provided by residues 63–67 and 125–128; these read DTPGM and NKTD. The G4 stretch occupies residues 125–128; that stretch reads NKTD. The interval 155–157 is G5; the sequence is ISA. The KH type-2 domain occupies 199–283; the sequence is VREKIMRQLG…MLNLWVKVKG (85 aa).

The protein belongs to the TRAFAC class TrmE-Era-EngA-EngB-Septin-like GTPase superfamily. Era GTPase family. In terms of assembly, monomer.

It localises to the cytoplasm. The protein resides in the cell inner membrane. Functionally, an essential GTPase that binds both GDP and GTP, with rapid nucleotide exchange. Plays a role in 16S rRNA processing and 30S ribosomal subunit biogenesis and possibly also in cell cycle regulation and energy metabolism. The protein is GTPase Era of Pseudomonas fluorescens (strain Pf0-1).